The chain runs to 281 residues: MSHADLARTIEAAWEDRADVTAATQGPVREAVEAALALLDSGQVRVAEKSGNADWQVNQWLKKAVLLSFRLTDMELISGAPGGAAWWDKVPSKFDGWDAERFRQAGFRAVPGAIVRRSAFIAPGAVLMPSFVNLGAHVGEGTMVDTWATVGSCAQIGKNCHISGGAGIGGVLEPLQANPVIIEDNCFIGARAEVAEGVIVGEGSVLSMGVYLGASTKIVDRATGEVVYGRVPPYSVVVSGSLPGKALPDGAPGPALYCAVIVKRVDAGTRAKTGINELLRD.

This sequence belongs to the transferase hexapeptide repeat family.

The protein localises to the cytoplasm. The enzyme catalyses (S)-2,3,4,5-tetrahydrodipicolinate + succinyl-CoA + H2O = (S)-2-succinylamino-6-oxoheptanedioate + CoA. The protein operates within amino-acid biosynthesis; L-lysine biosynthesis via DAP pathway; LL-2,6-diaminopimelate from (S)-tetrahydrodipicolinate (succinylase route): step 1/3. This chain is 2,3,4,5-tetrahydropyridine-2,6-dicarboxylate N-succinyltransferase, found in Methylobacterium sp. (strain 4-46).